Here is a 130-residue protein sequence, read N- to C-terminus: Small ribosomal subunit protein uS9 (130 aa).

The disordered stretch occupies residues 107–130; it reads DSRKVERKKPGLKKARKASQFSKR. The segment covering 111–130 has biased composition (basic residues); it reads VERKKPGLKKARKASQFSKR.

This sequence belongs to the universal ribosomal protein uS9 family.

The chain is Small ribosomal subunit protein uS9 from Streptococcus sanguinis (strain SK36).